Here is a 256-residue protein sequence, read N- to C-terminus: ATP synthase peripheral stalk subunit b, mitochondrial (256 aa).

Residues 1 to 42 constitute a mitochondrion transit peptide; it reads MLSRVVLSAAATAAPSLKNAAFLGPGVLQATRTFHTGQPHLV. Position 131 is an N6-succinyllysine (Lys131). An N6-acetyllysine mark is found at Lys139, Lys154, Lys162, Lys221, Lys233, and Lys244.

The protein belongs to the eukaryotic ATPase B chain family. As to quaternary structure, component of the ATP synthase complex composed at least of ATP5F1A/subunit alpha, ATP5F1B/subunit beta, ATP5MC1/subunit c (homooctomer), MT-ATP6/subunit a, MT-ATP8/subunit 8, ATP5ME/subunit e, ATP5MF/subunit f, ATP5MG/subunit g, ATP5MK/subunit k, ATP5MJ/subunit j, ATP5F1C/subunit gamma, ATP5F1D/subunit delta, ATP5F1E/subunit epsilon, ATP5PF/subunit F6, ATP5PB/subunit b, ATP5PD/subunit d, ATP5PO/subunit OSCP. ATP synthase complex consists of a soluble F(1) head domain (subunits alpha(3) and beta(3)) - the catalytic core - and a membrane F(0) domain - the membrane proton channel (subunits c, a, 8, e, f, g, k and j). These two domains are linked by a central stalk (subunits gamma, delta, and epsilon) rotating inside the F1 region and a stationary peripheral stalk (subunits F6, b, d, and OSCP).

It is found in the mitochondrion. Its subcellular location is the mitochondrion inner membrane. Functionally, subunit b, of the mitochondrial membrane ATP synthase complex (F(1)F(0) ATP synthase or Complex V) that produces ATP from ADP in the presence of a proton gradient across the membrane which is generated by electron transport complexes of the respiratory chain. ATP synthase complex consist of a soluble F(1) head domain - the catalytic core - and a membrane F(1) domain - the membrane proton channel. These two domains are linked by a central stalk rotating inside the F(1) region and a stationary peripheral stalk. During catalysis, ATP synthesis in the catalytic domain of F(1) is coupled via a rotary mechanism of the central stalk subunits to proton translocation. In vivo, can only synthesize ATP although its ATP hydrolase activity can be activated artificially in vitro. Part of the complex F(0) domain. Part of the complex F(0) domain and the peripheric stalk, which acts as a stator to hold the catalytic alpha(3)beta(3) subcomplex and subunit a/ATP6 static relative to the rotary elements. The protein is ATP synthase peripheral stalk subunit b, mitochondrial of Homo sapiens (Human).